A 243-amino-acid polypeptide reads, in one-letter code: ADP-ribosylation factor-like protein 10 (243 aa).

Residues 83–90 (GLDGSGKS), 127–131 (EIGGS), and 184–187 (NKQD) each bind GTP.

This sequence belongs to the small GTPase superfamily. Arf family.

The sequence is that of ADP-ribosylation factor-like protein 10 (Arl10) from Mus musculus (Mouse).